Here is a 646-residue protein sequence, read N- to C-terminus: Mitochondrial distribution and morphology protein 10 (646 aa).

Disordered stretches follow at residues 206-230 (KSTS…SLSN) and 315-347 (ETSS…GGGL). Positions 207–230 (STSSSMDRLDSSNPSLSSSTSLSN) are enriched in low complexity. The span at 315–333 (ETSSSASYPQRNGSVLHTG) shows a compositional bias: polar residues.

It belongs to the MDM10 family. Component of the ER-mitochondria encounter structure (ERMES) or MDM complex, composed of MMM1, MDM10, MDM12 and MDM34. Associates with the mitochondrial outer membrane sorting assembly machinery SAM(core) complex.

It localises to the mitochondrion outer membrane. Component of the ERMES/MDM complex, which serves as a molecular tether to connect the endoplasmic reticulum and mitochondria. Components of this complex are involved in the control of mitochondrial shape and protein biogenesis and may function in phospholipid exchange. MDM10 is involved in the late assembly steps of the general translocase of the mitochondrial outer membrane (TOM complex). Functions in the TOM40-specific route of the assembly of outer membrane beta-barrel proteins, including the association of TOM40 with the receptor TOM22 and small TOM proteins. Can associate with the SAM(core) complex as well as the MDM12-MMM1 complex, both involved in late steps of the major beta-barrel assembly pathway, that is responsible for biogenesis of all outer membrane beta-barrel proteins. May act as a switch that shuttles between both complexes and channels precursor proteins into the TOM40-specific pathway. Plays a role in mitochondrial morphology and in the inheritance of mitochondria. The chain is Mitochondrial distribution and morphology protein 10 from Mycosarcoma maydis (Corn smut fungus).